Here is a 453-residue protein sequence, read N- to C-terminus: Bifunctional protein GlmU (453 aa).

The pyrophosphorylase stretch occupies residues 1 to 226 (MKFSTVILAA…SIEVEGVNDR (226 aa)). UDP-N-acetyl-alpha-D-glucosamine contacts are provided by residues 8-11 (LAAG), K22, Q73, 78-79 (GT), 100-102 (YGD), G137, E151, N166, and N224. D102 is a Mg(2+) binding site. Position 224 (N224) interacts with Mg(2+). The interval 227–247 (IQLARLERAFQARQAKKLLEQ) is linker. Positions 248–453 (GVMLRDPARF…AGWQRPAKKK (206 aa)) are N-acetyltransferase. UDP-N-acetyl-alpha-D-glucosamine is bound by residues R330 and K348. H360 (proton acceptor) is an active-site residue. Y363 and N374 together coordinate UDP-N-acetyl-alpha-D-glucosamine. Residues A377, 383 to 384 (NY), S402, A420, and R437 contribute to the acetyl-CoA site.

In the N-terminal section; belongs to the N-acetylglucosamine-1-phosphate uridyltransferase family. This sequence in the C-terminal section; belongs to the transferase hexapeptide repeat family. As to quaternary structure, homotrimer. Requires Mg(2+) as cofactor.

The protein resides in the cytoplasm. The catalysed reaction is alpha-D-glucosamine 1-phosphate + acetyl-CoA = N-acetyl-alpha-D-glucosamine 1-phosphate + CoA + H(+). The enzyme catalyses N-acetyl-alpha-D-glucosamine 1-phosphate + UTP + H(+) = UDP-N-acetyl-alpha-D-glucosamine + diphosphate. It participates in nucleotide-sugar biosynthesis; UDP-N-acetyl-alpha-D-glucosamine biosynthesis; N-acetyl-alpha-D-glucosamine 1-phosphate from alpha-D-glucosamine 6-phosphate (route II): step 2/2. The protein operates within nucleotide-sugar biosynthesis; UDP-N-acetyl-alpha-D-glucosamine biosynthesis; UDP-N-acetyl-alpha-D-glucosamine from N-acetyl-alpha-D-glucosamine 1-phosphate: step 1/1. Its pathway is bacterial outer membrane biogenesis; LPS lipid A biosynthesis. In terms of biological role, catalyzes the last two sequential reactions in the de novo biosynthetic pathway for UDP-N-acetylglucosamine (UDP-GlcNAc). The C-terminal domain catalyzes the transfer of acetyl group from acetyl coenzyme A to glucosamine-1-phosphate (GlcN-1-P) to produce N-acetylglucosamine-1-phosphate (GlcNAc-1-P), which is converted into UDP-GlcNAc by the transfer of uridine 5-monophosphate (from uridine 5-triphosphate), a reaction catalyzed by the N-terminal domain. This is Bifunctional protein GlmU from Vibrio cholerae serotype O1 (strain ATCC 39541 / Classical Ogawa 395 / O395).